A 560-amino-acid chain; its full sequence is Alpha-keto-acid decarboxylase (560 aa).

Glu-61 is a thiamine diphosphate binding site. Positions 396 to 478 are thiamine pyrophosphate binding; that stretch reads TSFYGMADHR…VVVNNDGYTV (83 aa). Asp-446, Asn-473, and Gly-475 together coordinate Mg(2+).

It belongs to the TPP enzyme family. Requires a metal cation as cofactor. It depends on thiamine diphosphate as a cofactor.

Decarboxylates branched-chain and aromatic alpha-keto acids to aldehydes. This chain is Alpha-keto-acid decarboxylase (kdc), found in Mycobacterium bovis (strain ATCC BAA-935 / AF2122/97).